Here is a 122-residue protein sequence, read N- to C-terminus: Large ribosomal subunit protein uL14 (122 aa).

Belongs to the universal ribosomal protein uL14 family. As to quaternary structure, part of the 50S ribosomal subunit. Forms a cluster with proteins L3 and L19. In the 70S ribosome, L14 and L19 interact and together make contacts with the 16S rRNA in bridges B5 and B8.

In terms of biological role, binds to 23S rRNA. Forms part of two intersubunit bridges in the 70S ribosome. In Mesorhizobium japonicum (strain LMG 29417 / CECT 9101 / MAFF 303099) (Mesorhizobium loti (strain MAFF 303099)), this protein is Large ribosomal subunit protein uL14.